A 428-amino-acid chain; its full sequence is C4-dicarboxylate transport protein (428 aa).

The next 9 membrane-spanning stretches (helical) occupy residues 7–27 (SLYF…IVAP), 40–60 (FIKL…VLGI), 75–95 (LALL…LLIV), 143–163 (AFAR…GIAL), 196–216 (PIGA…GSLF), 221–241 (LMAT…GAIA), 306–326 (IYLT…MTLG), 329–349 (FTLL…TGSG), and 351–371 (IVLA…LALI).

It belongs to the dicarboxylate/amino acid:cation symporter (DAACS) (TC 2.A.23) family.

The protein resides in the cell inner membrane. Functionally, responsible for the transport of dicarboxylates such as succinate, fumarate, and malate from the periplasm across the membrane. This Solibacter usitatus (strain Ellin6076) protein is C4-dicarboxylate transport protein.